We begin with the raw amino-acid sequence, 426 residues long: Glutamate-1-semialdehyde 2,1-aminomutase (426 aa).

K265 bears the N6-(pyridoxal phosphate)lysine mark.

It belongs to the class-III pyridoxal-phosphate-dependent aminotransferase family. HemL subfamily. As to quaternary structure, homodimer. Requires pyridoxal 5'-phosphate as cofactor.

The protein localises to the cytoplasm. It carries out the reaction (S)-4-amino-5-oxopentanoate = 5-aminolevulinate. Its pathway is porphyrin-containing compound metabolism; protoporphyrin-IX biosynthesis; 5-aminolevulinate from L-glutamyl-tRNA(Glu): step 2/2. The sequence is that of Glutamate-1-semialdehyde 2,1-aminomutase from Escherichia coli O157:H7.